Here is a 186-residue protein sequence, read N- to C-terminus: Transcription factor HES-3 (186 aa).

Positions 1–49 (MEKKRRARINVSLEQLKSLLEKHYSHQIRKRKLEKADILELSVKYMRSL) constitute a bHLH domain. One can recognise an Orange domain in the interval 65–99 (QPSGFRSCLPGVSQLLRRGDEVGSGLRCPLVPESA). The interval 128 to 186 (APAAGGPRSPPPLLLLPESLPGSSASVPPPQPASSRCAESPGLGLRVWRPWGSPGDDLN) is disordered. Positions 142 to 153 (LLPESLPGSSAS) are enriched in low complexity. A WRPW motif motif is present at residues 175 to 178 (WRPW).

In terms of assembly, transcription repression requires formation of a complex with a corepressor protein of the Groucho/TLE family.

Its subcellular location is the nucleus. Transcriptional repressor of genes that require a bHLH protein for their transcription. This chain is Transcription factor HES-3 (HES3), found in Homo sapiens (Human).